The chain runs to 329 residues: Ubiquitin carboxyl-terminal hydrolase isozyme L5 (329 aa).

The region spanning 7-225 is the UCH catalytic domain; the sequence is EWCLMESDPG…IRFNLMAIVS (219 aa). Lys47 carries the post-translational modification N6-succinyllysine. Cys88 acts as the Nucleophile in catalysis. Lys158 bears the N6-acetyllysine mark. His164 serves as the catalytic Proton donor. An N6-succinyllysine modification is found at Lys289. One can recognise a ULD domain in the interval 291–319; it reads NYLPFIMELLKTLAEHQQLIPLVEKAKEK. The tract at residues 313–329 is interaction with ADRM1; the sequence is VEKAKEKQNAKKAQETK.

It belongs to the peptidase C12 family. As to quaternary structure, component of the 19S (PA700) regulatory complex of the 26S proteasome. Interacts with ADRM1 and NFRKB. Component of the INO80 complex; specifically part of a complex module associated with N-terminus of INO80.

It is found in the cytoplasm. The protein localises to the nucleus. It carries out the reaction Thiol-dependent hydrolysis of ester, thioester, amide, peptide and isopeptide bonds formed by the C-terminal Gly of ubiquitin (a 76-residue protein attached to proteins as an intracellular targeting signal).. Its activity is regulated as follows. Activated by ADRM1. Inhibited by interaction with NFRKB. Its function is as follows. Protease that specifically cleaves 'Lys-48'-linked polyubiquitin chains. Deubiquitinating enzyme associated with the 19S regulatory subunit of the 26S proteasome. Putative regulatory component of the INO80 complex; however is inactive in the INO80 complex and is activated by a transient interaction of the INO80 complex with the proteasome via ADRM1. The polypeptide is Ubiquitin carboxyl-terminal hydrolase isozyme L5 (Uchl5) (Mus musculus (Mouse)).